Reading from the N-terminus, the 212-residue chain is Golgi SNAP receptor complex member 2 (212 aa).

At Met-1 the chain carries N-acetylmethionine. Residues 1–190 (MDPLFQQTHK…LIEKRAFQDK (190 aa)) are Cytoplasmic-facing. Positions 61 to 107 (NKRQNARLRVDQLKYDVQHLQTALRNFQHRRHAREQQERQREELLSR) form a coiled coil. An IxM motif; signal for cargo packaging into COPII-coated vesicles motif is present at residues 118 to 120 (IPM). A helical; Anchor for type IV membrane protein membrane pass occupies residues 191-211 (YFMIGGMLLTCVVMFLVVQYL). Thr-212 is a topological domain (vesicular).

Belongs to the GOSR2 family. As to quaternary structure, part of a unique SNARE complex composed of the Golgi SNAREs GOSR1, STX5 and YKT6. Interacts (via IxM motif) with SEC24C and SEC24D; mediates GOSR2 packaging into COPII-coated vesicles. Interacts with BET1.

The protein resides in the golgi apparatus. Its subcellular location is the cis-Golgi network membrane. The protein localises to the golgi apparatus membrane. It is found in the endoplasmic reticulum membrane. In terms of biological role, involved in transport of proteins from the cis/medial-Golgi to the trans-Golgi network. The chain is Golgi SNAP receptor complex member 2 (GOSR2) from Homo sapiens (Human).